We begin with the raw amino-acid sequence, 534 residues long: Prolyl 4-hydroxylase subunit alpha-2 (534 aa).

A signal peptide spans Met1–Ala21. N-linked (GlcNAc...) asparagine glycosylation is present at Asn115. A TPR repeat occupies Val207 to His240. Residue Asn263 is glycosylated (N-linked (GlcNAc...) asparagine). The region spanning Thr413–Glu519 is the Fe2OG dioxygenase domain. Residues His431, Asp433, and His500 each contribute to the Fe cation site. Lys510 is a 2-oxoglutarate binding site.

This sequence belongs to the P4HA family. In terms of assembly, heterotetramer of two alpha-2 chains and two beta chains (the beta chain is the multi-functional PDI). The cofactor is Fe(2+). L-ascorbate serves as cofactor.

The protein resides in the endoplasmic reticulum lumen. It catalyses the reaction L-prolyl-[collagen] + 2-oxoglutarate + O2 = trans-4-hydroxy-L-prolyl-[collagen] + succinate + CO2. Its function is as follows. Catalyzes the post-translational formation of 4-hydroxyproline in -Xaa-Pro-Gly- sequences in collagens and other proteins. In Gallus gallus (Chicken), this protein is Prolyl 4-hydroxylase subunit alpha-2 (P4HA2).